Consider the following 513-residue polypeptide: Lysine--tRNA ligase (513 aa).

A compositionally biased stretch (polar residues) spans 1–11 (MTEPTQPNAAQ). The interval 1-22 (MTEPTQPNAAQPNVVPEVDDNK) is disordered. Residues Glu423 and Glu430 each contribute to the Mg(2+) site.

Belongs to the class-II aminoacyl-tRNA synthetase family. As to quaternary structure, homodimer. Mg(2+) serves as cofactor.

The protein resides in the cytoplasm. The catalysed reaction is tRNA(Lys) + L-lysine + ATP = L-lysyl-tRNA(Lys) + AMP + diphosphate. This is Lysine--tRNA ligase from Paraburkholderia xenovorans (strain LB400).